The following is a 329-amino-acid chain: 4-hydroxythreonine-4-phosphate dehydrogenase (329 aa).

Substrate is bound by residues His136 and Thr137. 3 residues coordinate a divalent metal cation: His166, His211, and His266. Substrate-binding residues include Lys274, Asn283, and Arg292.

The protein belongs to the PdxA family. As to quaternary structure, homodimer. The cofactor is Zn(2+). Requires Mg(2+) as cofactor. It depends on Co(2+) as a cofactor.

The protein resides in the cytoplasm. The enzyme catalyses 4-(phosphooxy)-L-threonine + NAD(+) = 3-amino-2-oxopropyl phosphate + CO2 + NADH. It functions in the pathway cofactor biosynthesis; pyridoxine 5'-phosphate biosynthesis; pyridoxine 5'-phosphate from D-erythrose 4-phosphate: step 4/5. Catalyzes the NAD(P)-dependent oxidation of 4-(phosphooxy)-L-threonine (HTP) into 2-amino-3-oxo-4-(phosphooxy)butyric acid which spontaneously decarboxylates to form 3-amino-2-oxopropyl phosphate (AHAP). The polypeptide is 4-hydroxythreonine-4-phosphate dehydrogenase (Escherichia coli O81 (strain ED1a)).